Consider the following 172-residue polypeptide: Protein GrpE (172 aa).

The interval 1 to 23 is disordered; it reads MNQDHPEFDSEDLSQNPPETDPL.

This sequence belongs to the GrpE family. In terms of assembly, homodimer.

It is found in the cytoplasm. In terms of biological role, participates actively in the response to hyperosmotic and heat shock by preventing the aggregation of stress-denatured proteins, in association with DnaK and GrpE. It is the nucleotide exchange factor for DnaK and may function as a thermosensor. Unfolded proteins bind initially to DnaJ; upon interaction with the DnaJ-bound protein, DnaK hydrolyzes its bound ATP, resulting in the formation of a stable complex. GrpE releases ADP from DnaK; ATP binding to DnaK triggers the release of the substrate protein, thus completing the reaction cycle. Several rounds of ATP-dependent interactions between DnaJ, DnaK and GrpE are required for fully efficient folding. The chain is Protein GrpE from Xanthomonas axonopodis pv. citri (strain 306).